Here is a 54-residue protein sequence, read N- to C-terminus: Light-harvesting protein B-800/850 alpha chain (54 aa).

Residues 1-14 lie on the Cytoplasmic side of the membrane; that stretch reads MTNGKIWLVVKPTV. A helical transmembrane segment spans residues 15–35; sequence GVPLFLSAAVIASVVIHAAVL. Residue H31 participates in a bacteriochlorophyll binding. Topologically, residues 36–54 are periplasmic; that stretch reads TTTTWLPAYYQGSAAVAAE.

This sequence belongs to the antenna complex alpha subunit family. The core complex is formed by different alpha and beta chains, binding bacteriochlorophyll molecules, and arranged most probably in tetrameric structures disposed around the reaction center. The non-pigmented gamma chains may constitute additional components.

The protein localises to the cell inner membrane. In terms of biological role, antenna complexes are light-harvesting systems, which transfer the excitation energy to the reaction centers. The sequence is that of Light-harvesting protein B-800/850 alpha chain (pucA) from Cereibacter sphaeroides (Rhodobacter sphaeroides).